The following is a 43-amino-acid chain: Photosystem I reaction center subunit IX (43 aa).

The helical transmembrane segment at 7–27 (YLSVAPVLSTLWFGSLAGLLI) threads the bilayer.

This sequence belongs to the PsaJ family.

Its subcellular location is the plastid. It is found in the chloroplast thylakoid membrane. May help in the organization of the PsaE and PsaF subunits. In Aethionema cordifolium (Lebanon stonecress), this protein is Photosystem I reaction center subunit IX.